The sequence spans 518 residues: Reduced folate transporter (518 aa).

M1 is modified (N-acetylmethionine). Residues M1 to V29 lie on the Cytoplasmic side of the membrane. A helical transmembrane segment spans residues F30 to P50. Folate-binding residues include I48 and T49. Residues Y51–V62 are Extracellular-facing. N56 carries N-linked (GlcNAc...) asparagine glycosylation. A helical membrane pass occupies residues T63–T85. Residues D86–R89 lie on the Cytoplasmic side of the membrane. The helical transmembrane segment at Y90–L110 threads the bilayer. The Extracellular segment spans residues G111–V114. The helical transmembrane segment at V115–Y137 threads the bilayer. Residues E121 and R131 each coordinate folate. Residues I138 to A151 lie on the Cytoplasmic side of the membrane. A helical transmembrane segment spans residues S152–E176. Residue V162 coordinates folate. The Extracellular portion of the chain corresponds to Q177–N181. The helical transmembrane segment at S182 to S200 threads the bilayer. Residues L201–Q266 lie on the Cytoplasmic side of the membrane. A helical transmembrane segment spans residues P267–V292. Folate contacts are provided by A281, G282, and I286. Topologically, residues L293–L300 are extracellular. The helical transmembrane segment at N301–F323 threads the bilayer. Over V324–A329 the chain is Cytoplasmic. Residues L330–M350 form a helical membrane-spanning segment. At Y351–V353 the chain is on the extracellular side. The chain crosses the membrane as a helical span at residues H354 to Q377. Residues Y366 and V370 each contribute to the folate site. Topologically, residues F378–L391 are cytoplasmic. Residues S392–T415 traverse the membrane as a helical segment. The required for substrate-binding stretch occupies residues A407–S419. Over L416–G423 the chain is Extracellular. The helical transmembrane segment at L424 to V448 threads the bilayer. At G449–L512 the chain is on the cytoplasmic side. Residues S473, S478, and S483 each carry the phosphoserine modification. The segment at Q480–A518 is disordered.

Belongs to the reduced folate carrier (RFC) transporter (TC 2.A.48) family.

Its subcellular location is the cell membrane. The protein resides in the apical cell membrane. It localises to the basolateral cell membrane. It catalyses the reaction 5-amino-1-(5-phospho-beta-D-ribosyl)imidazole-4-carboxamide(in) + (6S)-5-methyl-5,6,7,8-tetrahydrofolate(out) = 5-amino-1-(5-phospho-beta-D-ribosyl)imidazole-4-carboxamide(out) + (6S)-5-methyl-5,6,7,8-tetrahydrofolate(in). Its function is as follows. Antiporter that mediates the import of reduced folates, driven by the export of organic anions. Also acts as an importer of immunoreactive cyclic dinucleotides, but with a lower transporter activity. Mechanistically, acts as a secondary active transporter, which exports intracellular organic anions down their concentration gradients to facilitate the uptake of its substrates. Has high affinity for N5-methyltetrahydrofolate, the predominant circulating form of folate. Also mediates the import of antifolate drug methotrexate. 5-amino-4-imidazolecarboxamide riboside (AICAR), when phosphorylated to AICAR monophosphate, can serve as an organic anion for antiporter activity. This Cricetulus griseus (Chinese hamster) protein is Reduced folate transporter.